The following is a 215-amino-acid chain: Adenylate kinase (215 aa).

10–15 (GAGKGT) is a binding site for ATP. An NMP region spans residues 30–59 (STGDMFRAAIKEGTELGKQAKALMDQGKLV). AMP-binding positions include threonine 31, arginine 36, 57-59 (KLV), 85-88 (GFPR), and glutamine 92. The LID stretch occupies residues 122–159 (GRRVHQPSGRTYHIIYNPPKVAGQDDITGEELITRADD). ATP-binding positions include arginine 123 and 132–133 (TY). Arginine 156 and arginine 167 together coordinate AMP. Lysine 200 contributes to the ATP binding site.

Belongs to the adenylate kinase family. In terms of assembly, monomer.

Its subcellular location is the cytoplasm. The catalysed reaction is AMP + ATP = 2 ADP. It functions in the pathway purine metabolism; AMP biosynthesis via salvage pathway; AMP from ADP: step 1/1. Catalyzes the reversible transfer of the terminal phosphate group between ATP and AMP. Plays an important role in cellular energy homeostasis and in adenine nucleotide metabolism. In Haemophilus ducreyi (strain 35000HP / ATCC 700724), this protein is Adenylate kinase.